Consider the following 84-residue polypeptide: Mu-Sparatoxin-Hp1 (84 aa).

The signal sequence occupies residues 1–20; sequence MKIAIVMTLLLVAFSTASFA. Residues 21–35 constitute a propeptide that is removed on maturation; sequence IEPIERAALDLVMAR. Disulfide bonds link cysteine 54-cysteine 68, cysteine 61-cysteine 73, and cysteine 67-cysteine 78. Position 82 is a leucine amide (leucine 82).

In terms of tissue distribution, expressed by the venom gland.

It is found in the secreted. In terms of biological role, weakly nhibits voltage-gated sodium channels Nav1.7/SCN9A. High concentration of the toxin (3 uM) inhibits Nav1.7/SCN9A currents by 79%. This chain is Mu-Sparatoxin-Hp1, found in Heteropoda pingtungensis (Pingtung huntsman spider).